The following is a 208-amino-acid chain: GTP cyclohydrolase-2 (208 aa).

Residue 49 to 53 (RLHSE) coordinates GTP. Zn(2+) is bound by residues Cys54, Cys65, and Cys67. GTP-binding positions include Gln70, 92-94 (EGR), and Thr114. Catalysis depends on Asp126, which acts as the Proton acceptor. Arg128 acts as the Nucleophile in catalysis. 2 residues coordinate GTP: Thr149 and Lys154.

The protein belongs to the GTP cyclohydrolase II family. Requires Zn(2+) as cofactor.

It catalyses the reaction GTP + 4 H2O = 2,5-diamino-6-hydroxy-4-(5-phosphoribosylamino)-pyrimidine + formate + 2 phosphate + 3 H(+). Its pathway is cofactor biosynthesis; riboflavin biosynthesis; 5-amino-6-(D-ribitylamino)uracil from GTP: step 1/4. Its function is as follows. Catalyzes the conversion of GTP to 2,5-diamino-6-ribosylamino-4(3H)-pyrimidinone 5'-phosphate (DARP), formate and pyrophosphate. This is GTP cyclohydrolase-2 from Azotobacter vinelandii (strain DJ / ATCC BAA-1303).